A 132-amino-acid chain; its full sequence is Small ribosomal subunit protein uS8 (132 aa).

The protein belongs to the universal ribosomal protein uS8 family. Part of the 30S ribosomal subunit. Contacts proteins S5 and S12.

Functionally, one of the primary rRNA binding proteins, it binds directly to 16S rRNA central domain where it helps coordinate assembly of the platform of the 30S subunit. This is Small ribosomal subunit protein uS8 from Bacillus mycoides (strain KBAB4) (Bacillus weihenstephanensis).